The following is a 234-amino-acid chain: UPF0173 metal-dependent hydrolase RHECIAT_CH0001941 (234 aa).

It belongs to the UPF0173 family.

In Rhizobium etli (strain CIAT 652), this protein is UPF0173 metal-dependent hydrolase RHECIAT_CH0001941.